A 214-amino-acid polypeptide reads, in one-letter code: Probable adenylyl-sulfate kinase (214 aa).

13 to 20 (GLSGAGKT) is a binding site for ATP. Ser87 acts as the Phosphoserine intermediate in catalysis. The disordered stretch occupies residues 174–199 (WNRTNTFPLKSRPNPPHRHKSKSSRA).

The protein belongs to the APS kinase family.

It carries out the reaction adenosine 5'-phosphosulfate + ATP = 3'-phosphoadenylyl sulfate + ADP + H(+). It participates in sulfur metabolism; hydrogen sulfide biosynthesis; sulfite from sulfate: step 2/3. Catalyzes the synthesis of activated sulfate. The sequence is that of Probable adenylyl-sulfate kinase from Pseudomonas aeruginosa.